A 526-amino-acid chain; its full sequence is Peptide chain release factor 3 (526 aa).

The region spanning 8–277 (GKRRTFAIIS…GLTDWAPAPQ (270 aa)) is the tr-type G domain. GTP is bound by residues 17–24 (SHPDAGKT), 85–89 (DTPGH), and 139–142 (NKLD).

Belongs to the TRAFAC class translation factor GTPase superfamily. Classic translation factor GTPase family. PrfC subfamily.

Its subcellular location is the cytoplasm. Its function is as follows. Increases the formation of ribosomal termination complexes and stimulates activities of RF-1 and RF-2. It binds guanine nucleotides and has strong preference for UGA stop codons. It may interact directly with the ribosome. The stimulation of RF-1 and RF-2 is significantly reduced by GTP and GDP, but not by GMP. This is Peptide chain release factor 3 from Aliivibrio fischeri (strain ATCC 700601 / ES114) (Vibrio fischeri).